The primary structure comprises 408 residues: Transmembrane protein 237 (408 aa).

Residues 1–14 (MRTDSGARLEEGHL) are compositionally biased toward basic and acidic residues. Residues 1-137 (MRTDSGARLE…RRKTKKTQPA (137 aa)) form a disordered region. A phosphoserine mark is found at Ser25 and Ser49. Positions 60–77 (RPSEGNEPSTKELKEHPE) are enriched in basic and acidic residues. The segment covering 95–106 (TSSTQKKSSSSS) has biased composition (low complexity). The next 4 membrane-spanning stretches (helical) occupy residues 227–247 (MIGLFSHGFLAGCAVWNIVVI), 268–288 (LAYPFQSLLYLLLALSTISAF), 303–323 (FLALDPTALASFLYFTALILS), and 358–378 (WIVVNLVVALLVGLSWLFLSY).

This sequence belongs to the TMEM237 family. As to quaternary structure, part of the tectonic-like complex (also named B9 complex). Interacts with TMEM107.

It localises to the membrane. Its subcellular location is the cell projection. It is found in the cilium. Its function is as follows. Component of the transition zone in primary cilia. Required for ciliogenesis. The protein is Transmembrane protein 237 (TMEM237) of Homo sapiens (Human).